The sequence spans 38 residues: U-theraphotoxin-Aju1a (38 aa).

3 disulfides stabilise this stretch: cysteine 3/cysteine 24, cysteine 7/cysteine 30, and cysteine 16/cysteine 35.

As to expression, expressed by the venom gland.

It localises to the secreted. Its function is as follows. Has strong antifungal activity against C.albicans MDM8, C.krusei IOC 4559 (MIC=2.5-5 uM), C.glabrata IOC 45658 (MIC=2.5-5 uM), C.albicans IOC 45588 (MIC=2.5-5 uM), C.parapsilosis IOC 456416 (MIC=2.5-5 uM), C.tropicalis IOC 45608 (MIC=2.5-5 uM), C.guilliermondii IOC 455716 (MIC=2.5-5 uM) and A.niger (MIC=5-10 uM). Lacks antifungal activity against B.bassiana. Has no antibacterial effect against Gram-positive bacteria M.luteus, S.epidermidis, S.aureus or against Gram-negative bacteria E.coli and P.aeruginosa. Has no hemolytic activity against human erythrocytes. Probable ion channel inhibitor. This Avicularia juruensis (Yellow-banded pinktoe) protein is U-theraphotoxin-Aju1a.